The chain runs to 861 residues: DNA mismatch repair protein MutS (861 aa).

Position 618–625 (618–625 (GPNMGGKS)) interacts with ATP.

This sequence belongs to the DNA mismatch repair MutS family.

This protein is involved in the repair of mismatches in DNA. It is possible that it carries out the mismatch recognition step. This protein has a weak ATPase activity. This is DNA mismatch repair protein MutS from Shewanella frigidimarina (strain NCIMB 400).